Consider the following 175-residue polypeptide: Gamma-crystallin B (175 aa).

2 consecutive Beta/gamma crystallin 'Greek key' domains span residues 2 to 40 (GKIT…RVES) and 41 to 83 (GCWM…HLIP). Positions 84–88 (PHSGT) are connecting peptide. Beta/gamma crystallin 'Greek key' domains are found at residues 89 to 129 (YRMK…NVLE) and 130 to 172 (GSWI…RRVM).

It belongs to the beta/gamma-crystallin family. In terms of assembly, monomer.

Functionally, crystallins are the dominant structural components of the vertebrate eye lens. This is Gamma-crystallin B (CRYGB) from Macaca mulatta (Rhesus macaque).